A 338-amino-acid chain; its full sequence is 1-aminocyclopropane-1-carboxylate deaminase (338 aa).

Lys51 is modified (N6-(pyridoxal phosphate)lysine). The active-site Nucleophile is Ser78.

This sequence belongs to the ACC deaminase/D-cysteine desulfhydrase family. Homotrimer. Pyridoxal 5'-phosphate serves as cofactor.

It carries out the reaction 1-aminocyclopropane-1-carboxylate + H2O = 2-oxobutanoate + NH4(+). Its function is as follows. Catalyzes a cyclopropane ring-opening reaction, the irreversible conversion of 1-aminocyclopropane-1-carboxylate (ACC) to ammonia and alpha-ketobutyrate. Allows growth on ACC as a nitrogen source. The sequence is that of 1-aminocyclopropane-1-carboxylate deaminase from Paraburkholderia phytofirmans (strain DSM 17436 / LMG 22146 / PsJN) (Burkholderia phytofirmans).